Consider the following 93-residue polypeptide: Parbolysin P5 (93 aa).

3 disulfides stabilise this stretch: Cys16–Cys37, Cys22–Cys33, and Cys47–Cys60.

Belongs to the worm cytolysin family. As to expression, localized within the skin and proboscis and are most readily isolated from body mucus secretions.

The protein localises to the secreted. In terms of biological role, cytolysin that shows hemolytic activity (on bovine erythrocytes, HC(50)=5.75 mg/ml). This hemolytic activity is completely inhibited by small unilamelar vesicles composed of PC/PG, PC/PI and PC/PS in 1:1 molar ratios (with at least 100 mg/ml concentration). This is Parbolysin P5 from Parborlasia corrugatus (Antarctic nemertean worm).